The primary structure comprises 432 residues: Leucine-rich repeat-containing protein ODA7 (432 aa).

LRR repeat units lie at residues 47-68 (NLKA…PPLA), 69-90 (DLKC…EAVP), 91-112 (GLDT…ACCP), 113-134 (ALRT…AHLA), and 138-159 (ALQT…DILK). An LRRCT domain is found at 173 to 211 (PVVSNIKNYRKVLVTSIPSLTYLDDRPVFDNERKIAQAW). Positions 212 to 243 (LEGGLEGERAMRNQLKEEEEERSRKNHEFMMQ) form a coiled coil. Disordered stretches follow at residues 297 to 332 (RPGE…AAAE) and 368 to 432 (EELD…NDLD). Composition is skewed to low complexity over residues 323–332 (GAWGSGAAAE) and 407–425 (VAAA…ISAA).

This sequence belongs to the DNAAF1 family. In terms of assembly, interacts with both outer row and I1 inner row dyneins.

Its subcellular location is the cytoplasm. It is found in the cytoskeleton. The protein resides in the cilium axoneme. Cilium-specific protein required for cilia structures. Axonemal dynein-associated protein that participates in a structural link between inner and outer row dyneins. This Chlamydomonas reinhardtii (Chlamydomonas smithii) protein is Leucine-rich repeat-containing protein ODA7 (ODA7).